The following is a 445-amino-acid chain: Glutamate-1-semialdehyde 2,1-aminomutase (445 aa).

K281 carries the post-translational modification N6-(pyridoxal phosphate)lysine.

The protein belongs to the class-III pyridoxal-phosphate-dependent aminotransferase family. HemL subfamily. Homodimer. The cofactor is pyridoxal 5'-phosphate.

It is found in the cytoplasm. It carries out the reaction (S)-4-amino-5-oxopentanoate = 5-aminolevulinate. It functions in the pathway porphyrin-containing compound metabolism; protoporphyrin-IX biosynthesis; 5-aminolevulinate from L-glutamyl-tRNA(Glu): step 2/2. In Nocardioides sp. (strain ATCC BAA-499 / JS614), this protein is Glutamate-1-semialdehyde 2,1-aminomutase.